Reading from the N-terminus, the 1147-residue chain is ATP-dependent helicase/deoxyribonuclease subunit B (1147 aa).

Residue 8 to 15 coordinates ATP; sequence GRAGSGKS. 4 residues coordinate [4Fe-4S] cluster: C786, C1106, C1109, and C1115.

It belongs to the helicase family. AddB/RexB type 1 subfamily. As to quaternary structure, heterodimer of AddA and AddB. Requires Mg(2+) as cofactor. The cofactor is [4Fe-4S] cluster.

In terms of biological role, the heterodimer acts as both an ATP-dependent DNA helicase and an ATP-dependent, dual-direction single-stranded exonuclease. Recognizes the chi site generating a DNA molecule suitable for the initiation of homologous recombination. The AddB subunit has 5' -&gt; 3' nuclease activity but not helicase activity. The polypeptide is ATP-dependent helicase/deoxyribonuclease subunit B (Clostridium botulinum (strain Loch Maree / Type A3)).